The chain runs to 225 residues: MENQPKLNSSKEVIAFLAERFPQCFSAEGEARPLKIGIFQDLVERVGGEMNLSKTQLRAALRLYTSSWRYLYGVKAGAIRVDLDGNPCGELEEQHIAHARQQLEEAKARVQAQRAAQQAKKREAAAAAGQQDEGVRRERKPRPQQPRRKEGAEQRKPRPVAAKAPREERLTPVSDVSVLTVGQALKVKAGNNAMDATVLEITKDGVRVQLTSGMSMIVRAEHLVF.

Positions 107–169 (KARVQAQRAA…VAAKAPREER (63 aa)) are disordered. Low complexity predominate over residues 109-118 (RVQAQRAAQQ). Residues 137–146 (RERKPRPQQP) are compositionally biased toward basic residues. Residues 147 to 156 (RRKEGAEQRK) are compositionally biased toward basic and acidic residues.

The protein belongs to the ProQ family.

It localises to the cytoplasm. In terms of biological role, RNA chaperone with significant RNA binding, RNA strand exchange and RNA duplexing activities. May regulate ProP activity through an RNA-based, post-transcriptional mechanism. This chain is RNA chaperone ProQ, found in Klebsiella pneumoniae subsp. pneumoniae (strain ATCC 700721 / MGH 78578).